The following is a 49-amino-acid chain: Large ribosomal subunit protein bL33B (49 aa).

It belongs to the bacterial ribosomal protein bL33 family.

The sequence is that of Large ribosomal subunit protein bL33B from Lactobacillus gasseri (strain ATCC 33323 / DSM 20243 / BCRC 14619 / CIP 102991 / JCM 1131 / KCTC 3163 / NCIMB 11718 / NCTC 13722 / AM63).